Reading from the N-terminus, the 428-residue chain is C4-dicarboxylate transport protein (428 aa).

8 helical membrane-spanning segments follow: residues 8–28, 44–64, 78–98, 148–168, 184–204, 222–242, 307–327, and 355–375; these read VLYV…HLYP, LIKM…IAGM, LLYF…ATHI, GEIL…AHLG, VLFG…FGAM, LIGT…GAIA, IYMT…LTWM, and AATL…ILGI.

Belongs to the dicarboxylate/amino acid:cation symporter (DAACS) (TC 2.A.23) family.

The protein localises to the cell inner membrane. In terms of biological role, responsible for the transport of dicarboxylates such as succinate, fumarate, and malate from the periplasm across the membrane. The protein is C4-dicarboxylate transport protein of Burkholderia thailandensis (strain ATCC 700388 / DSM 13276 / CCUG 48851 / CIP 106301 / E264).